The sequence spans 66 residues: Pancreatic polypeptide prohormone (66 aa).

Tyr36 carries the post-translational modification Tyrosine amide. A propeptide spanning residues 60-66 (ELSPMDV) is cleaved from the precursor.

It belongs to the NPY family.

The protein resides in the secreted. Functionally, hormone secreted by pancreatic cells that acts as a regulator of pancreatic and gastrointestinal functions probably by signaling through the G protein-coupled receptor NPY4R2. The polypeptide is Pancreatic polypeptide prohormone (PPY) (Felis catus (Cat)).